Here is a 366-residue protein sequence, read N- to C-terminus: Histidinol-phosphate aminotransferase (366 aa).

Lys-228 is subject to N6-(pyridoxal phosphate)lysine.

Belongs to the class-II pyridoxal-phosphate-dependent aminotransferase family. Histidinol-phosphate aminotransferase subfamily. In terms of assembly, homodimer. Pyridoxal 5'-phosphate is required as a cofactor.

It carries out the reaction L-histidinol phosphate + 2-oxoglutarate = 3-(imidazol-4-yl)-2-oxopropyl phosphate + L-glutamate. It functions in the pathway amino-acid biosynthesis; L-histidine biosynthesis; L-histidine from 5-phospho-alpha-D-ribose 1-diphosphate: step 7/9. The sequence is that of Histidinol-phosphate aminotransferase from Corynebacterium glutamicum (strain R).